The chain runs to 439 residues: Guanine deaminase (439 aa).

H82 and H84 together coordinate Zn(2+). Substrate-binding positions include 84 to 87, 209 to 210, 237 to 240, and D327; these read HYPQ, RF, and HLCE. Zn(2+) contacts are provided by H237 and D327.

Belongs to the metallo-dependent hydrolases superfamily. ATZ/TRZ family. Zn(2+) is required as a cofactor.

It carries out the reaction guanine + H2O + H(+) = xanthine + NH4(+). Its pathway is purine metabolism; guanine degradation; xanthine from guanine: step 1/1. Its function is as follows. Catalyzes the hydrolytic deamination of guanine, producing xanthine and ammonia. The sequence is that of Guanine deaminase (guaD) from Escherichia coli (strain K12).